The following is a 403-amino-acid chain: Argininosuccinate synthase (403 aa).

ATP contacts are provided by residues 10-18 (AYSGGLDTS) and alanine 37. The L-citrulline site is built by tyrosine 88 and serine 93. Residue glycine 118 coordinates ATP. Residues threonine 120, asparagine 124, and aspartate 125 each coordinate L-aspartate. Asparagine 124 provides a ligand contact to L-citrulline. L-citrulline is bound by residues arginine 128, serine 178, serine 187, glutamate 263, and tyrosine 275.

This sequence belongs to the argininosuccinate synthase family. Type 1 subfamily. As to quaternary structure, homotetramer.

The protein localises to the cytoplasm. The enzyme catalyses L-citrulline + L-aspartate + ATP = 2-(N(omega)-L-arginino)succinate + AMP + diphosphate + H(+). The protein operates within amino-acid biosynthesis; L-arginine biosynthesis; L-arginine from L-ornithine and carbamoyl phosphate: step 2/3. The polypeptide is Argininosuccinate synthase (Marinobacter nauticus (strain ATCC 700491 / DSM 11845 / VT8) (Marinobacter aquaeolei)).